Reading from the N-terminus, the 486-residue chain is F420-non-reducing hydrogenase iron-sulfur subunit A (486 aa).

Ni(2+) contacts are provided by Cys-61 and Cys-64.

The protein belongs to the [NiFe]/[NiFeSe] hydrogenase large subunit family. As to quaternary structure, the F420-non-reducing hydrogenase is composed of three subunits; MvhA, MvhD and MvhG. It forms a complex with the heterodisulfide reductase (Hdr). Ni(2+) is required as a cofactor.

It is found in the cytoplasm. Its function is as follows. Part of a complex that provides reducing equivalents for heterodisulfide reductase. The polypeptide is F420-non-reducing hydrogenase iron-sulfur subunit A (mvhA) (Archaeoglobus profundus (strain DSM 5631 / JCM 9629 / NBRC 100127 / Av18)).